The primary structure comprises 251 residues: 4-hydroxy-tetrahydrodipicolinate reductase (251 aa).

Residues 9–14 (GCNGKM), 85–87 (ATT), and 109–112 (SANM) contribute to the NAD(+) site. Catalysis depends on H141, which acts as the Proton donor/acceptor. H142 is a binding site for (S)-2,3,4,5-tetrahydrodipicolinate. The active-site Proton donor is the K145. 151 to 152 (GT) is a binding site for (S)-2,3,4,5-tetrahydrodipicolinate.

Belongs to the DapB family.

The protein resides in the cytoplasm. The enzyme catalyses (S)-2,3,4,5-tetrahydrodipicolinate + NAD(+) + H2O = (2S,4S)-4-hydroxy-2,3,4,5-tetrahydrodipicolinate + NADH + H(+). It carries out the reaction (S)-2,3,4,5-tetrahydrodipicolinate + NADP(+) + H2O = (2S,4S)-4-hydroxy-2,3,4,5-tetrahydrodipicolinate + NADPH + H(+). It participates in amino-acid biosynthesis; L-lysine biosynthesis via DAP pathway; (S)-tetrahydrodipicolinate from L-aspartate: step 4/4. In terms of biological role, catalyzes the conversion of 4-hydroxy-tetrahydrodipicolinate (HTPA) to tetrahydrodipicolinate. In Caldanaerobacter subterraneus subsp. tengcongensis (strain DSM 15242 / JCM 11007 / NBRC 100824 / MB4) (Thermoanaerobacter tengcongensis), this protein is 4-hydroxy-tetrahydrodipicolinate reductase.